Consider the following 506-residue polypeptide: Histidine--tRNA ligase, mitochondrial (506 aa).

The N-terminal 33 residues, 1–33 (MHLLGLLPRRAWASLLSQLLRPPWASCTGAVRC), are a transit peptide targeting the mitochondrion. Serine 67 carries the post-translational modification Phosphoserine. L-histidine-binding positions include 131 to 133 (DLT), arginine 158, glutamine 174, aspartate 178, arginine 327, and 331 to 332 (YY). Lysine 444 carries the post-translational modification N6-acetyllysine.

Belongs to the class-II aminoacyl-tRNA synthetase family. Homodimer.

The protein localises to the mitochondrion. The enzyme catalyses tRNA(His) + L-histidine + ATP = L-histidyl-tRNA(His) + AMP + diphosphate + H(+). Functionally, mitochondrial aminoacyl-tRNA synthetase that catalyzes the ATP-dependent ligation of histidine to the 3'-end of its cognate tRNA, via the formation of an aminoacyl-adenylate intermediate (His-AMP). The sequence is that of Histidine--tRNA ligase, mitochondrial (HARS2) from Pongo abelii (Sumatran orangutan).